The primary structure comprises 167 residues: UPF0254 protein MJ1251 (167 aa).

It belongs to the UPF0254 family.

The polypeptide is UPF0254 protein MJ1251 (Methanocaldococcus jannaschii (strain ATCC 43067 / DSM 2661 / JAL-1 / JCM 10045 / NBRC 100440) (Methanococcus jannaschii)).